The sequence spans 203 residues: Ribosomal RNA large subunit methyltransferase E (203 aa).

G59, W61, D79, D97, and D119 together coordinate S-adenosyl-L-methionine. The Proton acceptor role is filled by K159.

It belongs to the class I-like SAM-binding methyltransferase superfamily. RNA methyltransferase RlmE family.

It is found in the cytoplasm. The enzyme catalyses uridine(2552) in 23S rRNA + S-adenosyl-L-methionine = 2'-O-methyluridine(2552) in 23S rRNA + S-adenosyl-L-homocysteine + H(+). In terms of biological role, specifically methylates the uridine in position 2552 of 23S rRNA at the 2'-O position of the ribose in the fully assembled 50S ribosomal subunit. The polypeptide is Ribosomal RNA large subunit methyltransferase E (Desulforapulum autotrophicum (strain ATCC 43914 / DSM 3382 / VKM B-1955 / HRM2) (Desulfobacterium autotrophicum)).